We begin with the raw amino-acid sequence, 1835 residues long: COPII coat assembly protein sec16 (1835 aa).

7 disordered regions span residues 33 to 295 (SKKE…RKST), 378 to 866 (DLLL…APVP), 1040 to 1068 (QSLG…DPRS), 1376 to 1404 (SDAA…ISRS), 1422 to 1485 (LPGT…HGMP), 1512 to 1682 (EDSA…LGEE), and 1695 to 1835 (VNKK…VMAK). The span at 123–133 (NVPTENGNVDI) shows a compositional bias: polar residues. A compositionally biased stretch (basic and acidic residues) spans 138-148 (RLEEHVAEEPH). Composition is skewed to polar residues over residues 153–164 (ENSTGLASQNDA) and 424–459 (VSYT…SYFS). Residues 473 to 482 (SFAERSKEGY) are compositionally biased toward basic and acidic residues. Pro residues predominate over residues 512–526 (VPQPPPRSSSIPAPP). Residues 624–638 (NLLAPNVPSAPAVPS) are compositionally biased toward low complexity. Over residues 655 to 667 (KPPPSPRYSPAPP) the composition is skewed to pro residues. Positions 668–678 (QSTNAAAAAPP) are enriched in low complexity. The span at 682 to 691 (YASQPASISG) shows a compositional bias: polar residues. Positions 708-724 (YHEKIHYQDQGQSEERP) are enriched in basic and acidic residues. Residues 741–752 (SEQPVSSENKGP) are compositionally biased toward polar residues. Residues 817–832 (PRRSQTQSPSQTLSPR) show a composition bias toward low complexity. Polar residues-rich tracts occupy residues 848-857 (HGSTSPTRTV) and 1040-1059 (QSLG…NAPS). The segment covering 1447-1458 (GRSSMDSQRSSS) has biased composition (low complexity). Polar residues-rich tracts occupy residues 1516–1533 (SGAQ…SDSA) and 1553–1562 (QGVSTTSQPD). Composition is skewed to basic and acidic residues over residues 1588 to 1606 (DGVR…KSFM) and 1623 to 1656 (KAER…EKKG). A compositionally biased stretch (pro residues) spans 1728 to 1739 (GPPPAMATPPPT). The segment covering 1740-1759 (GASGSRPSSSAGAPPSVSAS) has biased composition (low complexity). A compositionally biased stretch (pro residues) spans 1760-1772 (PAPPSLGAPPPAI).

The protein belongs to the SEC16 family.

It localises to the endoplasmic reticulum membrane. Involved in the initiation of assembly of the COPII coat required for the formation of transport vesicles from the endoplasmic reticulum (ER) and the selection of cargo molecules. Also involved in autophagy. The chain is COPII coat assembly protein sec16 (sec16) from Neosartorya fischeri (strain ATCC 1020 / DSM 3700 / CBS 544.65 / FGSC A1164 / JCM 1740 / NRRL 181 / WB 181) (Aspergillus fischerianus).